The sequence spans 194 residues: Outer-membrane lipoprotein LolB (194 aa).

An N-terminal signal peptide occupies residues 1–18; sequence MKLLQHLTLIFCLLILTA. C19 carries the N-palmitoyl cysteine lipid modification. C19 carries S-diacylglycerol cysteine lipidation.

The protein belongs to the LolB family. As to quaternary structure, monomer.

It localises to the cell outer membrane. Plays a critical role in the incorporation of lipoproteins in the outer membrane after they are released by the LolA protein. In Tolumonas auensis (strain DSM 9187 / NBRC 110442 / TA 4), this protein is Outer-membrane lipoprotein LolB.